A 252-amino-acid chain; its full sequence is Small ribosomal subunit protein uS3 (252 aa).

Positions 39 to 109 (IRNYVNTRLK…EVKIDVVEVV (71 aa)) constitute a KH type-2 domain. A compositionally biased stretch (basic and acidic residues) spans 222 to 240 (MKKIRDRRNDQRSRGGRDS). The disordered stretch occupies residues 222 to 252 (MKKIRDRRNDQRSRGGRDSRNKRRRRPKNTA). Residues 241–252 (RNKRRRRPKNTA) are compositionally biased toward basic residues.

This sequence belongs to the universal ribosomal protein uS3 family. In terms of assembly, part of the 30S ribosomal subunit. Forms a tight complex with proteins S10 and S14.

Binds the lower part of the 30S subunit head. Binds mRNA in the 70S ribosome, positioning it for translation. The chain is Small ribosomal subunit protein uS3 from Chlorobium phaeobacteroides (strain BS1).